Consider the following 472-residue polypeptide: Serine incorporator 3 (472 aa).

At 1 to 96 the chain is on the extracellular side; that stretch reads MGAVLGVFSL…KDCDVLVGFK (96 aa). Asparagine 34 is a glycosylation site (N-linked (GlcNAc...) asparagine). A helical membrane pass occupies residues 97–117; sequence AVYRINFAVAIFFFAFFLLML. At 118–132 the chain is on the cytoplasmic side; the sequence is KVKTSKDPRAAVHNG. A helical membrane pass occupies residues 133–153; the sequence is FWFFKIAAIIGIMIGSFYIPG. The Extracellular portion of the chain corresponds to 154–158; that stretch reads GSFTE. The chain crosses the membrane as a helical span at residues 159–179; it reads VWFVAGMLGASFFIIIQLVLL. The Cytoplasmic portion of the chain corresponds to 180–206; that stretch reads VDMAHSWNELWVNRMEEGNPRLWYAAL. The helical transmembrane segment at 207-227 threads the bilayer; the sequence is LSFTSLFYILSIVFAALLYVF. The Extracellular portion of the chain corresponds to 228-238; the sequence is YTKPDDCTENK. The helical transmembrane segment at 239–259 threads the bilayer; that stretch reads VFISLNLIFCVAVSIVSILPK. The Cytoplasmic segment spans residues 260–329; sequence VQEHQPRSGL…APAYAPPSQS (70 aa). The chain crosses the membrane as a helical span at residues 330–350; sequence GHFMNLDDIWGLIIFVFCLIY. Residues 351-405 are Extracellular-facing; it reads SSFRTSSNSQVNKLTLSGSDSVILGDTTNGANDEEDGQPRRAVDNEKEGVQYSYS. Serine 371 bears the Phosphoserine mark. The chain crosses the membrane as a helical span at residues 406 to 426; sequence FFHLMLCCASLYIMMTITSWY. The Cytoplasmic segment spans residues 427–445; sequence SPDAKFQKVSSKWLAVWFK. A helical transmembrane segment spans residues 446 to 466; that stretch reads MGSSWLCLLLYLWTLVAPLVL. The Extracellular segment spans residues 467 to 472; the sequence is TGRDFS.

The protein belongs to the TDE1 family. N-glycosylated. In terms of tissue distribution, highly expressed in the neuronal populations such as Purkinje cells in the cerebellum, brainstem and spinal motor neurons, locus coeruleus and raphe nuclei. Highly expressed also in thymus, kidney liver and testis.

Its subcellular location is the cell membrane. It is found in the golgi apparatus membrane. It carries out the reaction a 1,2-diacyl-sn-glycero-3-phospho-L-serine(in) = a 1,2-diacyl-sn-glycero-3-phospho-L-serine(out). It catalyses the reaction a 1,2-diacyl-sn-glycero-3-phosphocholine(in) = a 1,2-diacyl-sn-glycero-3-phosphocholine(out). The enzyme catalyses a 1,2-diacyl-sn-glycero-3-phosphoethanolamine(in) = a 1,2-diacyl-sn-glycero-3-phosphoethanolamine(out). Functionally, restriction factor required to restrict infectivity of gammaretroviruses: acts by inhibiting an early step of viral infection. Impairs the penetration of the viral particle into the cytoplasm. Non-ATP-dependent, non-specific lipid transporter for phosphatidylserine, phosphatidylcholine, and phosphatidylethanolamine. Functions as a scramblase that flips lipids in both directions across the membrane. Phospholipid scrambling results in gammaretroviral surface exposure of phosphatidylserine and loss of membrane asymmetry, which leads to loss of infectivity. This is Serine incorporator 3 (Serinc3) from Mus musculus (Mouse).